Consider the following 280-residue polypeptide: MAAVCFSLSRCCSAVHRPAVTAVRFAQTAAAPAAQPRIKKFQIYRWDPDTVGDKPRMQTYEIDLNTCGPMVLDALIKIKNEMDSTLTFRRSCREGICGSCAMNINGGNTLACLNKIDTNTSKVTKIYPLPHMYVVKDLVPDMSNFYAQYKSIEPYLKKKDESQQGKQQYLQSVEDRQKLDGLYECILCACCSTSCPSYWWNADKYLGPAVLMQAYRWMIDSRDDFTEDRLSKLQDPFSLYRCHTIMNCTRTCPKGLNPGKAIAEIKKMMVTYKQKDAVAA.

Residues 1 to 25 constitute a mitochondrion transit peptide; sequence MAAVCFSLSRCCSAVHRPAVTAVRF. The 2Fe-2S ferredoxin-type domain occupies 39 to 129; it reads KKFQIYRWDP…TSKVTKIYPL (91 aa). The [2Fe-2S] cluster site is built by Cys-92, Cys-97, Cys-100, and Cys-112. One can recognise a 4Fe-4S ferredoxin-type domain in the interval 175 to 205; that stretch reads DRQKLDGLYECILCACCSTSCPSYWWNADKY. Cys-185, Cys-188, and Cys-191 together coordinate [4Fe-4S] cluster. Residue Cys-195 participates in [3Fe-4S] cluster binding. Trp-200 is an a ubiquinone binding site. [3Fe-4S] cluster-binding residues include Cys-242 and Cys-248. Cys-252 contacts [4Fe-4S] cluster.

It belongs to the succinate dehydrogenase/fumarate reductase iron-sulfur protein family. As to quaternary structure, component of complex II composed of four subunits: the flavoprotein (FP) sdha, iron-sulfur protein (IP) sdhb, and a cytochrome b composed of sdhc and sdhd. Requires [2Fe-2S] cluster as cofactor. It depends on [3Fe-4S] cluster as a cofactor. [4Fe-4S] cluster serves as cofactor.

It localises to the mitochondrion inner membrane. The catalysed reaction is a quinone + succinate = fumarate + a quinol. It catalyses the reaction (R)-malate + a quinone = enol-oxaloacetate + a quinol. The enzyme catalyses (S)-malate + a quinone = enol-oxaloacetate + a quinol. Its pathway is carbohydrate metabolism; tricarboxylic acid cycle; fumarate from succinate (eukaryal route): step 1/1. Enol-oxaloacetate inhibits the succinate dehydrogenase activity. Iron-sulfur protein (IP) subunit of the succinate dehydrogenase complex (mitochondrial respiratory chain complex II), responsible for transferring electrons from succinate to ubiquinone (coenzyme Q). SDH also oxidizes malate to the non-canonical enol form of oxaloacetate, enol-oxaloacetate. Enol-oxaloacetate, which is a potent inhibitor of the succinate dehydrogenase activity, is further isomerized into keto-oxaloacetate. In Danio rerio (Zebrafish), this protein is Succinate dehydrogenase [ubiquinone] iron-sulfur subunit, mitochondrial (sdhb).